Consider the following 305-residue polypeptide: tRNA pseudouridine synthase B (305 aa).

Residue D38 is the Nucleophile of the active site.

It belongs to the pseudouridine synthase TruB family. Type 1 subfamily.

The enzyme catalyses uridine(55) in tRNA = pseudouridine(55) in tRNA. Its function is as follows. Responsible for synthesis of pseudouridine from uracil-55 in the psi GC loop of transfer RNAs. The polypeptide is tRNA pseudouridine synthase B (Latilactobacillus sakei subsp. sakei (strain 23K) (Lactobacillus sakei subsp. sakei)).